We begin with the raw amino-acid sequence, 589 residues long: Muscarinic acetylcholine receptor M3 (589 aa).

At 1–66 the chain is on the extracellular side; that stretch reads MTLHSNSTTS…DPLGGHTIWQ (66 aa). Residues Asn-6, Asn-15, Asn-41, Asn-48, and Asn-52 are each glycosylated (N-linked (GlcNAc...) asparagine). A helical transmembrane segment spans residues 67 to 90; that stretch reads VVFIAFLTGFLALVTIIGNILVIV. Over 91–103 the chain is Cytoplasmic; the sequence is AFKVNKQLKTVNN. Residues 104 to 129 form a helical membrane-spanning segment; it reads YFLLSLACADLIIGVISMNLFTTYII. The Extracellular portion of the chain corresponds to 130–141; that stretch reads MNRWALGNLACD. Cys-140 and Cys-220 are disulfide-bonded. Residues 142 to 163 form a helical membrane-spanning segment; it reads LWLSIDYVASNASVMNLLVISF. The Cytoplasmic portion of the chain corresponds to 164–183; it reads DRYFSITRPLTYRAKRTTKR. A helical membrane pass occupies residues 184 to 205; sequence AGVMIGLAWVISFVLWAPAILF. The Extracellular segment spans residues 206–228; it reads WQYFVGKRTVPPGECFIQFLSEP. A helical transmembrane segment spans residues 229–251; it reads TITFGTAIAAFYMPVTIMTILYW. The Cytoplasmic portion of the chain corresponds to 252–490; sequence RIYKETEKRT…SLIKEKKAAQ (239 aa). A Basolateral sorting signal motif is present at residues 274 to 280; the sequence is AEAENFV. The segment at 323-356 is disordered; the sequence is AEQMDQDHSSSDSWNNNDAAASLENSASSDEEDI. Positions 333–344 are enriched in low complexity; it reads SDSWNNNDAAAS. Ser-384 carries the phosphoserine modification. Residues 491 to 513 traverse the membrane as a helical segment; sequence TLSAILLAFIITWTPYNIMVLVN. Over 514-525 the chain is Extracellular; the sequence is TFCDSCIPKTYW. An intrachain disulfide couples Cys-516 to Cys-519. A helical transmembrane segment spans residues 526–545; that stretch reads NLGYWLCYINSTVNPVCYAL. Topologically, residues 546-589 are cytoplasmic; sequence CNKTFRTTFKTLLLCQCDKRKRRKQQYQQRQSVIFHKRVPEQAL.

This sequence belongs to the G-protein coupled receptor 1 family. Muscarinic acetylcholine receptor subfamily. CHRM3 sub-subfamily. As to quaternary structure, homodimer; the dimers can form tetramers. Interacts with NALCN. Interacts with TMEM147.

Its subcellular location is the cell membrane. It is found in the postsynaptic cell membrane. The protein resides in the basolateral cell membrane. It localises to the endoplasmic reticulum membrane. Its function is as follows. The muscarinic acetylcholine receptor mediates various cellular responses, including inhibition of adenylate cyclase, breakdown of phosphoinositides and modulation of potassium channels through the action of G proteins. Primary transducing effect is Pi turnover. This chain is Muscarinic acetylcholine receptor M3 (Chrm3), found in Rattus norvegicus (Rat).